The primary structure comprises 200 residues: Imidazoleglycerol-phosphate dehydratase (200 aa).

Residues E13, 39–47 (HMLTLLTFH), 68–72 (HHLIE), R94, and R116 each bind substrate. Residues H39, H68, H69, and E72 each contribute to the Mn(2+) site. Positions 141, 165, 166, and 169 each coordinate Mn(2+). Residues 165–173 (HHIIEGMFK) and 195–197 (SSK) each bind substrate.

The protein belongs to the imidazoleglycerol-phosphate dehydratase family. It depends on Mn(2+) as a cofactor.

It localises to the cytoplasm. It carries out the reaction D-erythro-1-(imidazol-4-yl)glycerol 3-phosphate = 3-(imidazol-4-yl)-2-oxopropyl phosphate + H2O. The protein operates within amino-acid biosynthesis; L-histidine biosynthesis; L-histidine from 5-phospho-alpha-D-ribose 1-diphosphate: step 6/9. The chain is Imidazoleglycerol-phosphate dehydratase (hisB) from Lactococcus lactis subsp. lactis (strain IL1403) (Streptococcus lactis).